We begin with the raw amino-acid sequence, 424 residues long: N-succinylarginine dihydrolase (424 aa).

Substrate is bound by residues 19–28, asparagine 110, and 137–138; these read AGLSRGNVAS and HR. Glutamate 174 is an active-site residue. Arginine 206 serves as a coordination point for substrate. Residue histidine 242 is part of the active site. Substrate is bound by residues aspartate 244 and asparagine 351. The Nucleophile role is filled by cysteine 357.

It belongs to the succinylarginine dihydrolase family. In terms of assembly, homodimer.

It catalyses the reaction N(2)-succinyl-L-arginine + 2 H2O + 2 H(+) = N(2)-succinyl-L-ornithine + 2 NH4(+) + CO2. The protein operates within amino-acid degradation; L-arginine degradation via AST pathway; L-glutamate and succinate from L-arginine: step 2/5. Catalyzes the hydrolysis of N(2)-succinylarginine into N(2)-succinylornithine, ammonia and CO(2). This Zymomonas mobilis subsp. mobilis (strain ATCC 31821 / ZM4 / CP4) protein is N-succinylarginine dihydrolase.